Reading from the N-terminus, the 286-residue chain is Beta-lactamase SHV-3 (286 aa).

An N-terminal signal peptide occupies residues 1–21 (MRYIRLCIISLLATLPLAVHA). Serine 66 functions as the Acyl-ester intermediate in the catalytic mechanism. A disulfide bridge connects residues cysteine 73 and cysteine 119. The active-site Proton acceptor is glutamate 164. A substrate-binding site is contributed by 230 to 232 (KTG).

The protein belongs to the class-A beta-lactamase family.

The enzyme catalyses a beta-lactam + H2O = a substituted beta-amino acid. Functionally, this enzyme hydrolyzes cefotaxime, ceftazidime and other broad spectrum cephalosporins. The chain is Beta-lactamase SHV-3 (bla) from Klebsiella pneumoniae.